The primary structure comprises 263 residues: Putative 2-aminoethylphosphonate transport system permease protein PhnV (263 aa).

6 helical membrane passes run 13–33, 69–89, 104–124, 131–151, 185–205, and 233–253; these read GVVA…VILM, LTIG…AALA, VFYL…LVAF, MNGT…AFTF, LPLL…LSMG, and NIAD…LLMM. The 189-residue stretch at 65 to 253 folds into the ABC transmembrane type-1 domain; it reads LLASLTIGFC…LVAITLLLMM (189 aa).

This sequence belongs to the binding-protein-dependent transport system permease family.

The protein localises to the cell inner membrane. Its function is as follows. Probably part of the PhnSTUV complex (TC 3.A.1.11.5) involved in 2-aminoethylphosphonate import. Probably responsible for the translocation of the substrate across the membrane. The chain is Putative 2-aminoethylphosphonate transport system permease protein PhnV (phnV) from Salmonella typhi.